Here is a 113-residue protein sequence, read N- to C-terminus: Dynein light chain Tctex-type 1 (113 aa).

Methionine 1 is modified (N-acetylmethionine). The tract at residues 41 to 113 (QWTTNVVEQT…CIVSAFGLSI (73 aa)) is interaction with GNB1.

The protein belongs to the dynein light chain Tctex-type family. Homodimer. The cytoplasmic dynein 1 complex consists of two catalytic heavy chains (HCs) and a number of non-catalytic subunits presented by intermediate chains (ICs), light intermediate chains (LICs) and light chains (LCs); the composition seems to vary in respect to the IC, LIC and LC composition. The heavy chain homodimer serves as a scaffold for the probable homodimeric assembly of the respective non-catalytic subunits. The ICs and LICs bind directly to the HC dimer and dynein LCs assemble on the IC dimer. DYNLT1 and DYNLT3 compete for association with dynein IC (DYNC1I1 or DYNC1I2). Self-associates. Interacts with RHO. Interacts with DYNC1I1 and DYNC1I2. Interacts with DOC2A, DOC2B and SCN10A. Interacts with PVR. Interacts with SVIL isoform 2. Interacts with GNB1; the interaction occurs in presence of guanine nucleotide-binding protein G(T) subunit gamma; the interaction diminishes the association of DYNLT1 with dynein IC (DYNC1I1 or DYNC1I2). Interacts with GNB2, GNB3 and GNB5; the interactions occur in presence of guanine nucleotide-binding protein G(T) subunit gamma. Interacts with ACVR2B and ARHGEF2. Interacts with DNAI4. Interacts with CFAP61. Post-translationally, phosphorylated by BMPR2. The phosphorylation status is proposed to regulate the association with the cytoplasmic dynein complex and may have role in cytoplasmic dynein cargo release.

It localises to the golgi apparatus. The protein resides in the cytoplasm. Its subcellular location is the cytoskeleton. It is found in the spindle. Acts as one of several non-catalytic accessory components of the cytoplasmic dynein 1 complex that are thought to be involved in linking dynein to cargos and to adapter proteins that regulate dynein function. Cytoplasmic dynein 1 acts as a motor for the intracellular retrograde motility of vesicles and organelles along microtubules. Binds to transport cargos and is involved in apical cargo transport such as rhodopsin-bearing vesicles in polarized epithelia. Is involved in intracellular targeting of D-type retrovirus gag polyproteins to the cytoplasmic assembly site. May also be a accessory component of axonemal dynein. Its function is as follows. Plays a role in neuronal morphogenesis; the function is independent of cytoplasmic dynein and seems to be coupled to regulation of the actin cytoskeleton by enhancing Rac1 activity. Required for neurite outgrowth. The function in neurogenesis may be regulated by association with a G-protein beta-gamma dimer. May function as a receptor-independent activator of heterotrimeric G-protein signaling; the activation appears to be independent of a nucleotide exchange. Plays a role in regulating neurogenesis; inhibits the genesis of neurons from precursor cells during cortical development presumably by antagonizing ARHGEF2. Unrelated to the role in retrograde microtubule-associated movement may play a role in the dimerization of cytoplasmic proteins/domains such as for ACVR2B. Binds to the cytoplasmic domain of ACVR2B and, in vitro, inhibits ACVR2B signaling. Involved in the regulation of mitotic spindle orientation. The sequence is that of Dynein light chain Tctex-type 1 (Dynlt1) from Rattus norvegicus (Rat).